The following is a 417-amino-acid chain: MSLSNKLPVTDVDLKGKRVLIRVDFNVPLDENKNVTNPQRIVGALPTIKYAIDNGAKAVVLMSHLGRPDGKVNPKYSLKPVVPVLEKLLGKSVTFAEDCVGPQTEETVNKASDGQVILLENLRFHAEEEGSSKDAEGKKVKADKADVDAFRKGLTALGDVYVNDAFGTAHRAHSSMVGVDLPQKAAGFLVKKELEYFAKALESPARPFLAILGGAKVSDKIQLIDNLLPKVNSLIITGGMAFTFKKTLENVKIGNSLFDEAGSKIVGEIVEKAKKYNVEIVLPVDYVTADKFSADATVGAATDATGIPDGYMGLDVGPESVKLYQKTIAEAKTILWNGPPGVFELKPFASATEATLDAAVKAAESGSIVIIGGGDTATVAAKYKVEDKISHVSTGGGASLELLEGKELPGVAALSSK.

(2R)-3-phosphoglycerate contacts are provided by Val23, Asp24, Phe25, Asn26, Gln39, Arg40, Ser63, His64, Gly66, Arg67, Leu122, Arg123, His170, and Arg171. Gly214 is an ADP binding site. Position 214 (Gly214) interacts with CDP. The AMP site is built by Ala215 and Lys216. Residue Ala215 coordinates ATP. A Mg(2+)-binding site is contributed by Ala215. Residue Asp219 participates in CDP binding. Mg(2+) is bound at residue Asp219. Lys220 provides a ligand contact to AMP. Lys220 lines the ATP pocket. Gly238 lines the ADP pocket. Gly238 is a binding site for CDP. AMP contacts are provided by Gly239 and Gly313. 2 residues coordinate ATP: Gly239 and Gly313. The CDP site is built by Gly338 and Phe343. Phe343 contacts ADP. Position 344 (Glu344) interacts with AMP. 3 residues coordinate ATP: Glu344, Asp375, and Thr376. Residue Asp375 participates in Mg(2+) binding.

It belongs to the phosphoglycerate kinase family. As to quaternary structure, monomer. Mg(2+) is required as a cofactor.

It is found in the cytoplasm. It localises to the mitochondrion. The catalysed reaction is (2R)-3-phosphoglycerate + ATP = (2R)-3-phospho-glyceroyl phosphate + ADP. The protein operates within carbohydrate degradation; glycolysis; pyruvate from D-glyceraldehyde 3-phosphate: step 2/5. In terms of biological role, catalyzes one of the two ATP producing reactions in the glycolytic pathway via the reversible conversion of 1,3-diphosphoglycerate to 3-phosphoglycerate. Both L- and D- forms of purine and pyrimidine nucleotides can be used as substrates, but the activity is much lower on pyrimidines. Negatively regulates the biosynthesis of acetyl-CoA from pyruvate in the mitochondrion. This chain is Phosphoglycerate kinase (PGKA), found in Penicillium citrinum.